The primary structure comprises 124 residues: uncharacterized protein (124 aa).

The first 22 residues, 1–22, serve as a signal peptide directing secretion; that stretch reads MGTSSVLLMIASSLILLEVVMT.

This is an uncharacterized protein from Caenorhabditis elegans.